The sequence spans 85 residues: Coiled-coil-helix-coiled-coil-helix domain-containing protein 7 (85 aa).

The 43-residue stretch at 13–55 (SNPCLEETDASTKCMDDNRYEKDLCTPYFVKYKNCRKFWNGIM) folds into the CHCH domain. 2 consecutive short sequence motifs (cx9C motif) follow at residues 16–26 (CLEETDASTKC) and 37–47 (CTPYFVKYKNC). 2 disulfides stabilise this stretch: cysteine 16/cysteine 47 and cysteine 26/cysteine 37.

This sequence belongs to the CHCHD7 family.

Its subcellular location is the mitochondrion intermembrane space. This chain is Coiled-coil-helix-coiled-coil-helix domain-containing protein 7 (chchd7), found in Xenopus tropicalis (Western clawed frog).